A 351-amino-acid chain; its full sequence is Tropomodulin-2 (351 aa).

Serine 25 is modified (phosphoserine).

Belongs to the tropomodulin family. In terms of assembly, binds to the N-terminus of tropomyosin and to actin. Binds to TMBr3 as well as to other low molecular mass tropomyosins (TM5a or TM5), but not to high molecular mass tropomyosins (TM2 or TMBr1). As to expression, neuronal-tissue specific.

The protein localises to the cytoplasm. It localises to the cytoskeleton. Blocks the elongation and depolymerization of the actin filaments at the pointed end. The Tmod/TM complex contributes to the formation of the short actin protofilament, which in turn defines the geometry of the membrane skeleton. This Rattus norvegicus (Rat) protein is Tropomodulin-2 (Tmod2).